The primary structure comprises 427 residues: Gamma-glutamyl phosphate reductase (427 aa).

This sequence belongs to the gamma-glutamyl phosphate reductase family.

It is found in the cytoplasm. It carries out the reaction L-glutamate 5-semialdehyde + phosphate + NADP(+) = L-glutamyl 5-phosphate + NADPH + H(+). The protein operates within amino-acid biosynthesis; L-proline biosynthesis; L-glutamate 5-semialdehyde from L-glutamate: step 2/2. Catalyzes the NADPH-dependent reduction of L-glutamate 5-phosphate into L-glutamate 5-semialdehyde and phosphate. The product spontaneously undergoes cyclization to form 1-pyrroline-5-carboxylate. This is Gamma-glutamyl phosphate reductase from Bifidobacterium adolescentis (strain ATCC 15703 / DSM 20083 / NCTC 11814 / E194a).